The chain runs to 147 residues: Large ribosomal subunit protein uL15 (147 aa).

Residues Met-1 to Gln-54 are disordered. The span at Thr-30–Val-46 shows a compositional bias: basic residues.

This sequence belongs to the universal ribosomal protein uL15 family. As to quaternary structure, part of the 50S ribosomal subunit.

In terms of biological role, binds to the 23S rRNA. The polypeptide is Large ribosomal subunit protein uL15 (Thermosipho melanesiensis (strain DSM 12029 / CIP 104789 / BI429)).